The primary structure comprises 128 residues: Large ribosomal subunit protein bL20c (128 aa).

Belongs to the bacterial ribosomal protein bL20 family.

Its subcellular location is the plastid. In terms of biological role, binds directly to 23S ribosomal RNA and is necessary for the in vitro assembly process of the 50S ribosomal subunit. It is not involved in the protein synthesizing functions of that subunit. This Lathraea clandestina (Purple toothwort) protein is Large ribosomal subunit protein bL20c (rpl20).